We begin with the raw amino-acid sequence, 141 residues long: NADH-quinone oxidoreductase subunit A (141 aa).

A run of 3 helical transmembrane segments spans residues 24 to 44 (LLAL…LLLA), 77 to 97 (VPFY…AFIA), and 106 to 126 (LGWA…VALI).

It belongs to the complex I subunit 3 family. NDH-1 is composed of 14 different subunits. Subunits NuoA, H, J, K, L, M, N constitute the membrane sector of the complex.

The protein resides in the cell inner membrane. It carries out the reaction a quinone + NADH + 5 H(+)(in) = a quinol + NAD(+) + 4 H(+)(out). In terms of biological role, NDH-1 shuttles electrons from NADH, via FMN and iron-sulfur (Fe-S) centers, to quinones in the respiratory chain. The immediate electron acceptor for the enzyme in this species is believed to be ubiquinone. Couples the redox reaction to proton translocation (for every two electrons transferred, four hydrogen ions are translocated across the cytoplasmic membrane), and thus conserves the redox energy in a proton gradient. This chain is NADH-quinone oxidoreductase subunit A, found in Syntrophotalea carbinolica (strain DSM 2380 / NBRC 103641 / GraBd1) (Pelobacter carbinolicus).